A 4367-amino-acid chain; its full sequence is Guanylate cyclase (4367 aa).

Residues 1–10 (MKKTRTTAAE) are compositionally biased toward polar residues. Residues 1–70 (MKKTRTTAAE…MSFLQGKHQQ (70 aa)) are disordered. At 1–150 (MKKTRTTAAE…FKNLWEQFHR (150 aa)) the chain is on the cytoplasmic side. The segment covering 19–33 (PHDEHRGRGREHGGA) has biased composition (basic and acidic residues). A compositionally biased stretch (polar residues) spans 54–63 (HQATQKQMSF). The chain crosses the membrane as a helical span at residues 151–171 (VINWWFLVMAIIQAIPQLHYN). Over 172 to 174 (PNH) the chain is Extracellular. A helical membrane pass occupies residues 175–195 (AWSTALPFAIVLVFGMLKDAF). At 196 to 373 (TDLGRRERDR…GFKRPHIEKD (178 aa)) the chain is on the cytoplasmic side. A helical membrane pass occupies residues 374 to 394 (INTYLFISFFIVFLTILISVM). At 395-452 (SKWSVQERDSGDTGVTDAGASSGSGSSSGETSQTYGSSVEFMLGSRDLLQNPWMSILR) the chain is on the extracellular side. The tract at residues 402–426 (RDSGDTGVTDAGASSGSGSSSGETS) is disordered. The span at 407 to 426 (TGVTDAGASSGSGSSSGETS) shows a compositional bias: low complexity. The chain crosses the membrane as a helical span at residues 453–473 (FLAVYAPVLPLSLPLILDVVY). Over 474 to 2258 (LLQSVLIEGD…VHGRLSLMRV (1785 aa)) the chain is Cytoplasmic. Disordered regions lie at residues 486 to 535 (IRGG…QQPL), 550 to 699 (SEKF…ISGR), 831 to 918 (ETSA…ASSL), 932 to 966 (RLEE…PQLA), 980 to 1047 (VGIQ…GELS), 1079 to 1164 (GMSF…MPAV), 1344 to 1593 (PSGT…SLKS), 1607 to 1652 (FRRG…TGTG), 1773 to 1861 (GGRG…GLRS), and 1881 to 1946 (DKQH…PQHL). Positions 523-535 (AHSSQNASLQQPL) are enriched in polar residues. Composition is skewed to basic and acidic residues over residues 605-628 (ETLR…REQL) and 670-679 (RRSDDRDRKS). Over residues 850-863 (SAASSRSQSAPASA) the composition is skewed to low complexity. The span at 880 to 892 (QTLTNQQTGQQSP) shows a compositional bias: polar residues. Positions 906–917 (ASPGAADSPASS) are enriched in low complexity. The span at 932-948 (RLEETGSQKEEDSRSDR) shows a compositional bias: basic and acidic residues. Over residues 983 to 996 (QSQHSSQSLLSSRQ) the composition is skewed to low complexity. Over residues 1025 to 1047 (DRMYSRDYHRESRSSSPRDGELS) the composition is skewed to basic and acidic residues. Composition is skewed to polar residues over residues 1084–1094 (SRPSSQFTFSS) and 1117–1130 (RSLT…TASP). The segment covering 1344-1357 (PSGTSASSGAPSGP) has biased composition (low complexity). Composition is skewed to gly residues over residues 1370-1381 (QGQGHGSLGAPG) and 1389-1400 (CLGGAGGSGARG). A compositionally biased stretch (pro residues) spans 1443-1454 (VPSPRPLSPAGP). Residues 1527–1542 (SFKEKHEEFAFSKDED) show a composition bias toward basic and acidic residues. A compositionally biased stretch (acidic residues) spans 1543 to 1567 (TATVDQDDTQSATDEEHDVEGEEEE). Low complexity predominate over residues 1583-1593 (SASASLMSLKS). Composition is skewed to polar residues over residues 1628–1652 (GRSS…TGTG), 1779–1791 (VSLS…SSAK), and 1843–1852 (VNPSGQTYSQ). Residues 1881–1922 (DKQHQRGHGPEGDEGSHELEGHDAHTGDSHGGHHRDQAEPRA) are compositionally biased toward basic and acidic residues. Over residues 1933–1942 (RLPQKTQNRL) the composition is skewed to polar residues. Residues 2259-2279 (STVILWSFFKSLCIGLPTFLF) form a helical membrane-spanning segment. At 2280–2289 (QPQAFWSAVE) the chain is on the extracellular side. Residues 2290–2310 (VYDPLLLMIVDFFWTTLPGII) traverse the membrane as a helical segment. Over 2311 to 2343 (HGYSDQDLPTHLLPSVPVLYTPGRRRLYFNGFR) the chain is Cytoplasmic. Residues 2344–2364 (FILWTVEGIIYSFLIFYLLQA) traverse the membrane as a helical segment. Topologically, residues 2365–2376 (TWMDGNTFHDGQ) are extracellular. A helical transmembrane segment spans residues 2377–2397 (VLGFHSYGILLLFGSLLQSNV). The Cytoplasmic portion of the chain corresponds to 2398-2408 (RIILETSLWTP). The chain crosses the membrane as a helical span at residues 2409–2429 (TFLFTTIVLCTIMFFPTVLLY). At 2430 to 2444 (SVTGWPRRYMELAGR) the chain is on the extracellular side. A helical membrane pass occupies residues 2445–2465 (VVFAWPMLYFLIPLWVSIGIL). Topologically, residues 2466 to 2724 (VQLLLQVFTS…LKRLVPWYRV (259 aa)) are cytoplasmic. Residues 2725-2745 (IFMLIALYQLLSFLTEYFIDI) form a helical membrane-spanning segment. Residues 2746-2762 (HWNPGETEMEPWMCVPT) are Extracellular-facing. Residues 2763 to 2783 (LVVEIGFAAVVVCTFYDFIFL) form a helical membrane-spanning segment. The Cytoplasmic segment spans residues 2784–2785 (DH). A helical membrane pass occupies residues 2786–2806 (FSLILNSIVFLMVSSSIVFYT). Topologically, residues 2807-2823 (ASHVDGTLTSVLFPVFT) are extracellular. A helical membrane pass occupies residues 2824–2844 (FVILRISFLQAVVWNILFLIV). At 2845-2858 (TVARFMLDKKYLPP) the chain is on the cytoplasmic side. The chain crosses the membrane as a helical span at residues 2859–2879 (LNFVHYIPLFIGIDVFVAFVG). Residues 2880 to 2903 (YRLEYNQRKSFLLDYSVDASRRKQ) lie on the Extracellular side of the membrane. The chain crosses the membrane as a helical span at residues 2904–2924 (REILNTMLPSFVVDQMINSEL). Over 2925–3693 (NEEGIPTSLK…RTHFYNNKSN (769 aa)) the chain is Cytoplasmic. Positions 2942-3150 (SVIFCDVYEF…DTVNTASRMK (209 aa)) constitute a Guanylate cyclase 1 domain. 6 disordered regions span residues 3214–3245 (DVIS…ASSG), 3359–3402 (GQTE…SRFD), 3456–3475 (SGDE…EVPL), 3485–3508 (QARE…HTPT), 3523–3596 (GCAA…ETEK), and 3620–3653 (FRRR…VDDE). The segment covering 3383–3402 (RADRRPAGRREDSRGDSRFD) has biased composition (basic and acidic residues). Composition is skewed to basic and acidic residues over residues 3485 to 3499 (QARE…KRSG), 3529 to 3541 (EEEK…RESE), and 3549 to 3569 (TESR…DARE). The span at 3626-3637 (AAPSEAASPSSA) shows a compositional bias: low complexity. A helical membrane pass occupies residues 3694-3714 (INTIEQALIIFLVTFCVQTLT). Residues 3715 to 3736 (RLALPRFYVVCSHHTINLHVCT) are Extracellular-facing. A helical transmembrane segment spans residues 3737–3757 (GLYWAVRATYTLAAFVLWMLF). Over 3758-3772 (HYRNRKEVATCLELR) the chain is Cytoplasmic. Residues 3773-3793 (WMVFLLNLLFISASCVFALSN) form a helical membrane-spanning segment. Residues 3794–3895 (SWGVCGQQQE…GSDLVTANGR (102 aa)) lie on the Extracellular side of the membrane. The helical transmembrane segment at 3896-3916 (AYTYWLLSDTIELFFYIVILH) threads the bilayer. Residues 3917–3921 (HNTGL) are Cytoplasmic-facing. The chain crosses the membrane as a helical span at residues 3922–3942 (LFQNCILVDVLLMTMSLTFII). Topologically, residues 3943–3950 (TTARETAS) are extracellular. Residues 3951 to 3971 (TVSTIATFPCYVFFNLVSAYC) traverse the membrane as a helical segment. At 3972-4367 (KEYIDRLTFY…GSTPGSALGS (396 aa)) the chain is on the cytoplasmic side. Residues 4024–4159 (TFLFADICGF…MDVLTGNMME (136 aa)) form the Guanylate cyclase 2 domain. Positions 4029, 4030, and 4073 each coordinate Mg(2+). Residues 4292–4367 (ASHGDSGPSD…GSTPGSALGS (76 aa)) are disordered. The span at 4333–4344 (DGLKQLRKEIER) shows a compositional bias: basic and acidic residues. Polar residues predominate over residues 4356–4367 (DIGSTPGSALGS).

The protein in the N-terminal section; belongs to the cation transport ATPase (P-type) (TC 3.A.3) family. Type IV subfamily. It in the C-terminal section; belongs to the adenylyl cyclase class-4/guanylyl cyclase family. In terms of assembly, interacts with chaperone CDC50.1; the interaction regulates guanylate cyclase GC trafficking and sensing environmental changes. Interacts with UGO; the interaction regulates guanylate cyclase GC trafficking and catalytic activity. Mg(2+) is required as a cofactor. Requires Mn(2+) as cofactor.

It localises to the cell membrane. The enzyme catalyses GTP = 3',5'-cyclic GMP + diphosphate. In terms of biological role, catalyzes the synthesis of the second messenger cGMP from GTP. During the tachyzoite lytic growth cycle in host cells, detects and transduces environmental changes in potassium, phosphatidic acid and pH levels. By producing cGMP in response to these environmental changes, activates PKG and thereby regulates PKG-dependent microneme secretion which is essential for tachyzoite motility, host cell attachment invasion of and egress from host cells. May play a role in the fission of connected tachyzoites at their basal pole during egress. Does not display flippase activity towards phosphatidylserine, phosphatidic acid or phosphatidylcholine. The polypeptide is Guanylate cyclase (Toxoplasma gondii (strain ATCC 50853 / GT1)).